The sequence spans 269 residues: MKSFSNIDFSKLSLIDSIIATSQIIREDFPTKFVISDLYNKVKEAKFYISSEIEPNLKLKKLLKLFYKTWNFGAASGIYKLSDVLWIDNVLKTRQGTAVSLGILFLHIAQELKLPLNPVVFPTQLILRADWINKKKWLINPFNGEMLDQHTLEVWLKGNISPTAELYEHDLYKAESITVIRKMLDILKSALMEEKKMELALNVSNLLLQINPNDPYEIRDRGLIYANLECNHVALTDLIYFVEHCPEDPISEIIKVQIHAIEQKKMILH.

The protein belongs to the UPF0162 family.

The sequence is that of UPF0162 protein BUsg_167 from Buchnera aphidicola subsp. Schizaphis graminum (strain Sg).